Consider the following 484-residue polypeptide: Protein nucleotidyltransferase YdiU (484 aa).

ATP contacts are provided by Gly-81, Gly-83, Arg-84, Lys-103, Asp-115, Gly-116, Arg-166, and Arg-173. The active-site Proton acceptor is Asp-244. 2 residues coordinate Mg(2+): Asn-245 and Asp-254. Position 254 (Asp-254) interacts with ATP.

The protein belongs to the SELO family. Mg(2+) is required as a cofactor. It depends on Mn(2+) as a cofactor.

The enzyme catalyses L-seryl-[protein] + ATP = 3-O-(5'-adenylyl)-L-seryl-[protein] + diphosphate. It catalyses the reaction L-threonyl-[protein] + ATP = 3-O-(5'-adenylyl)-L-threonyl-[protein] + diphosphate. The catalysed reaction is L-tyrosyl-[protein] + ATP = O-(5'-adenylyl)-L-tyrosyl-[protein] + diphosphate. It carries out the reaction L-histidyl-[protein] + UTP = N(tele)-(5'-uridylyl)-L-histidyl-[protein] + diphosphate. The enzyme catalyses L-seryl-[protein] + UTP = O-(5'-uridylyl)-L-seryl-[protein] + diphosphate. It catalyses the reaction L-tyrosyl-[protein] + UTP = O-(5'-uridylyl)-L-tyrosyl-[protein] + diphosphate. Its function is as follows. Nucleotidyltransferase involved in the post-translational modification of proteins. It can catalyze the addition of adenosine monophosphate (AMP) or uridine monophosphate (UMP) to a protein, resulting in modifications known as AMPylation and UMPylation. This chain is Protein nucleotidyltransferase YdiU, found in Shewanella loihica (strain ATCC BAA-1088 / PV-4).